The chain runs to 373 residues: Glutamate 5-kinase (373 aa).

K15 is a binding site for ATP. Substrate is bound by residues S55, D142, and N154. ATP contacts are provided by residues 174 to 175 and 216 to 222; these read TD and TGGMVTK. One can recognise a PUA domain in the interval 281 to 359; the sequence is SGKIIVDDGA…GEIEAILGYK (79 aa).

The protein belongs to the glutamate 5-kinase family.

The protein resides in the cytoplasm. It carries out the reaction L-glutamate + ATP = L-glutamyl 5-phosphate + ADP. It participates in amino-acid biosynthesis; L-proline biosynthesis; L-glutamate 5-semialdehyde from L-glutamate: step 1/2. Its function is as follows. Catalyzes the transfer of a phosphate group to glutamate to form L-glutamate 5-phosphate. The sequence is that of Glutamate 5-kinase from Geobacter sulfurreducens (strain ATCC 51573 / DSM 12127 / PCA).